Reading from the N-terminus, the 132-residue chain is Large ribosomal subunit protein bL19 (132 aa).

The protein belongs to the bacterial ribosomal protein bL19 family.

In terms of biological role, this protein is located at the 30S-50S ribosomal subunit interface and may play a role in the structure and function of the aminoacyl-tRNA binding site. The sequence is that of Large ribosomal subunit protein bL19 from Persephonella marina (strain DSM 14350 / EX-H1).